The primary structure comprises 436 residues: Na(+)/H(+) antiporter NhaA 2 (436 aa).

11 helical membrane-spanning segments follow: residues 35-55 (FGGGLLLLGAVLALLWANSPW), 80-100 (LATWAADGLLAIFFFVVGLEL), 116-136 (ALPVVAAIGGMIVPALIYVGI), 147-167 (GWAIPTATDIAFALAVLAVIG), 176-196 (AFLLTLAVVDDLLAITVIAIF), 201-221 (FKLTPLLVALLPIALFGLLVQ), 226-246 (WWWALIPLAVVAWTLVHESGV), 283-303 (VSAGFAVPVFAFFAAGVSLRG), 313-333 (PIVVGIVAGLVLGKVLGIFGS), 354-374 (LLGVSLLAGIGFTVSLLIGEL), and 385-405 (VKAAVLTGSVIAALLASAVLS).

The protein belongs to the NhaA Na(+)/H(+) (TC 2.A.33) antiporter family.

Its subcellular location is the cell membrane. The catalysed reaction is Na(+)(in) + 2 H(+)(out) = Na(+)(out) + 2 H(+)(in). Na(+)/H(+) antiporter that extrudes sodium in exchange for external protons. In Salinispora arenicola (strain CNS-205), this protein is Na(+)/H(+) antiporter NhaA 2.